The following is a 277-amino-acid chain: MEIVRDVESVRAVLRPFTNRKIGLVPTMGALHSGHLSLVHEMKKHADVVIVSIFVNPLQFSPGEDYEKYPRCEEVDCEKCASAGVDVVYIPSAEGMYPDGFSTSVDIGPMARELCGASRQNFINGIMVVLIKLVMQTNAHCMILGEKDYQMLHLTRQLFRDLNIGVDVLQGNTVRSAEGLALSSRHQYLSSAEITKANFLYGFLLEVGQQLSDDPHGQQEIIARGKLRLEQEGFEVDYLEVRDNNTLEHMQTFRKPARVFLAVYLGNCRLIDNVLLA.

An ATP-binding site is contributed by 28–35; sequence MGALHSGH. His35 serves as the catalytic Proton donor. (R)-pantoate is bound at residue Gln59. Beta-alanine is bound at residue Gln59. Residues 145 to 148, Val174, and 182 to 185 each bind ATP; these read GEKD and LSSR.

The protein belongs to the pantothenate synthetase family. In terms of assembly, homodimer.

It localises to the cytoplasm. The enzyme catalyses (R)-pantoate + beta-alanine + ATP = (R)-pantothenate + AMP + diphosphate + H(+). Its pathway is cofactor biosynthesis; (R)-pantothenate biosynthesis; (R)-pantothenate from (R)-pantoate and beta-alanine: step 1/1. Functionally, catalyzes the condensation of pantoate with beta-alanine in an ATP-dependent reaction via a pantoyl-adenylate intermediate. This is Pantothenate synthetase from Anaplasma marginale (strain St. Maries).